We begin with the raw amino-acid sequence, 1001 residues long: MSGLSNKRAAGDGGSGPPEKKMNREEKTTTTLIEPIRLGGISSTEEMDSKVLQFKNKKLAERLEQRQACEDELRERIEKLEKRQATDDATLLIVNRYWAQLDETVEALLQCYENQRELSSGTEVPGCQEGLTRDVIPRPDPGTSDLREPLPVQFRAPLSEPALAFVVALGASSCEEVELQLQGRMEFSKAAVSRVVEASDRLQRQVEELCQRVYSRGDSEAPGEVARVRTRELGRENRRLQDLATQLQEKHHRISLEYSELQDKVTSTETKVLEMETTVEDLQWDIEKLRKREQKLNKHLAEALEQLNSGYYVSGSSTGFQGGQITLSMQKFEMLNAELEENQELANSRMAELEKLQAELQGAVRTNERLKVALRSLPEEVVRETGEYRMLQAQFSLLYNESLQVKTQLDEARGLLLASKNSHLRHIEHMESDELGLQKKLRTEVIQLEDTLAQVRKEYEMLRIEFEQNLAANEQAGPINREMRHLISSLQNHNHQLKGDAQRYKRKLREVQAEIGKLRAQASGSSHCIPTLSHPDDPGLNALAPGKEDSGPGPGGTPDCKKEMALLAGATSATSSIKKEELVSSEDDAQALTPVTQGLPSRGREPEARPKRELREREGPSLGPPPAASTLSRADREKAKVEEAKRKESELLKGLRAELKKAQESQKEMKLLLDMYKSAPKEQRDKVQLMAAERKAKAEVDELRSRIRELEERDRRESKKIADEDALRRIRQAEEQIEHLQRKLGATKQEEEALLSEMDVTGQAFEDMQEQNGRLLQQLREKDDANFKLMSERIKANQIHKLLREEKDELGEQVLGLKSQVDAQLLTVQKLEEKERALQGSLGGVEKELTLRSQALELNKRKAVEAAQLAEDLKVQLEHVQTRLREIQPCLAESRAAREKESFNLKRAQEDISRLRRKLEKQRKVEVYADADEILQEEIKEYKARLTCPCCNTRKKDAVLTKCFHVFCFECVRGRYEARQRKCPKCNAAFGAHDFHRVYIS.

The segment at 1 to 40 is disordered; it reads MSGLSNKRAAGDGGSGPPEKKMNREEKTTTTLIEPIRLGG. Over residues 18-28 the composition is skewed to basic and acidic residues; that stretch reads PEKKMNREEKT. K20 carries the N6-acetyllysine modification. At S42 the chain carries Phosphoserine. The stretch at 55-91 forms a coiled coil; the sequence is KNKKLAERLEQRQACEDELRERIEKLEKRQATDDATL. The segment at 122–142 is disordered; it reads TEVPGCQEGLTRDVIPRPDPG. Coiled-coil stretches lie at residues 189–377 and 437–525; these read KAAV…LRSL and LQKK…ASGS. An N6-acetyllysine mark is found at K355 and K517. Residues 519–647 form a disordered region; the sequence is RAQASGSSHC…KAKVEEAKRK (129 aa). The span at 565–576 shows a compositional bias: low complexity; sequence ALLAGATSATSS. Residues K578 and K579 each participate in a glycyl lysine isopeptide (Lys-Gly) (interchain with G-Cter in SUMO2) cross-link. Phosphoserine occurs at positions 584 and 585. Basic and acidic residues-rich tracts occupy residues 602–619 and 633–647; these read RGRE…EREG and RADR…AKRK. Residues 627-946 are a coiled coil; sequence AASTLSRADR…EEIKEYKARL (320 aa). Residues 948-987 form an RING-type zinc finger; that stretch reads CPCCNTRKKDAVLTKCFHVFCFECVRGRYEARQRKCPKCN.

The protein belongs to the BRE1 family. Component of the RNF20/40 complex (also known as BRE1 complex) probably composed of 2 copies of RNF20/BRE1A and 2 copies of RNF40/BRE1B. Interacts with UBE2E1/UBCH6. Interacts with RB1 and WAC.

Its subcellular location is the nucleus. It catalyses the reaction S-ubiquitinyl-[E2 ubiquitin-conjugating enzyme]-L-cysteine + [acceptor protein]-L-lysine = [E2 ubiquitin-conjugating enzyme]-L-cysteine + N(6)-ubiquitinyl-[acceptor protein]-L-lysine.. Its pathway is protein modification; protein ubiquitination. Functionally, component of the RNF20/40 E3 ubiquitin-protein ligase complex that mediates monoubiquitination of 'Lys-120' of histone H2B (H2BK120ub1). H2BK120ub1 gives a specific tag for epigenetic transcriptional activation and is also prerequisite for histone H3 'Lys-4' and 'Lys-79' methylation (H3K4me and H3K79me, respectively). It thereby plays a central role in histone code and gene regulation. The RNF20/40 complex forms a H2B ubiquitin ligase complex in cooperation with the E2 enzyme UBE2A or UBE2B; reports about the cooperation with UBE2E1/UBCH are contradictory. Required for transcriptional activation of Hox genes. The protein is E3 ubiquitin-protein ligase BRE1B (Rnf40) of Mus musculus (Mouse).